Here is a 796-residue protein sequence, read N- to C-terminus: Molybdenum cofactor sulfurase (796 aa).

The residue at position 246 (Lys-246) is an N6-(pyridoxal phosphate)lysine. Residue Cys-418 is part of the active site. The region spanning 650–796 (LRLLRQSSQR…LTCGDVVVVT (147 aa)) is the MOSC domain. At Ser-752 the chain carries Phosphoserine.

It belongs to the class-V pyridoxal-phosphate-dependent aminotransferase family. MOCOS subfamily. Pyridoxal 5'-phosphate serves as cofactor.

The enzyme catalyses Mo-molybdopterin + L-cysteine + AH2 = thio-Mo-molybdopterin + L-alanine + A + H2O. Sulfurates the molybdenum cofactor. Sulfation of molybdenum is essential for xanthine dehydrogenase (XDH) and aldehyde oxidase (ADO) enzymes in which molybdenum cofactor is liganded by 1 oxygen and 1 sulfur atom in active form. In Drosophila persimilis (Fruit fly), this protein is Molybdenum cofactor sulfurase.